Here is a 375-residue protein sequence, read N- to C-terminus: uncharacterized protein (375 aa).

It belongs to the IMPDH/GMPR family.

This is an uncharacterized protein from Mycobacterium tuberculosis (strain CDC 1551 / Oshkosh).